The sequence spans 309 residues: Olfactory receptor 1A2 (309 aa).

The Extracellular portion of the chain corresponds to Met-1–Asn-25. The N-linked (GlcNAc...) asparagine glycan is linked to Asn-5. Residues Val-26–Ile-49 form a helical membrane-spanning segment. At Cys-50–Asn-57 the chain is on the cytoplasmic side. A helical transmembrane segment spans residues Pro-58–Pro-79. Residues Lys-80 to Gln-100 lie on the Extracellular side of the membrane. The cysteines at positions 97 and 189 are disulfide-linked. Residues Met-101–Tyr-120 form a helical membrane-spanning segment. The Cytoplasmic portion of the chain corresponds to Asp-121–Arg-139. A helical transmembrane segment spans residues Ser-140 to Pro-158. The Extracellular segment spans residues His-159 to Asn-195. Residues Val-196 to Val-218 traverse the membrane as a helical segment. At Gln-219–Lys-235 the chain is on the cytoplasmic side. Residues Ala-236–Tyr-258 form a helical membrane-spanning segment. At Phe-259–Ala-270 the chain is on the extracellular side. The chain crosses the membrane as a helical span at residues Val-271–Leu-290. Over Arg-291–Ser-309 the chain is Cytoplasmic.

This sequence belongs to the G-protein coupled receptor 1 family.

Its subcellular location is the cell membrane. Functionally, odorant receptor. In Homo sapiens (Human), this protein is Olfactory receptor 1A2 (OR1A2).